The following is a 332-amino-acid chain: Decaprenyl-phosphate phosphoribosyltransferase (332 aa).

Residues 1–12 (MSEHAAEHHRDT) show a composition bias toward basic and acidic residues. A disordered region spans residues 1–36 (MSEHAAEHHRDTQNFLTSEPHTTAIEDNKKRQPPKN). 2 consecutive transmembrane segments (helical) span residues 50 to 70 (WVKNVLVLAAPLAAGADAIFN) and 74 to 94 (IIDVAIAFVVFCFGASAIYLV). 5-phospho-alpha-D-ribose 1-diphosphate contacts are provided by Lys-52 and Tyr-92. Mg(2+)-binding residues include Asn-95 and Asp-99. Lys-109 provides a ligand contact to 5-phospho-alpha-D-ribose 1-diphosphate. A run of 2 helical transmembrane segments spans residues 114–134 (IAAGVLPVGMAYGMAVALIAL) and 146–166 (VALACVIGVYIALQLGYCFGW). Lys-167 and Arg-184 together coordinate 5-phospho-alpha-D-ribose 1-diphosphate. A run of 2 helical transmembrane segments spans residues 169 to 189 (MPVIDIALVSSGFMLRAMAGG) and 190 to 210 (VAAGIELSQWFLLVAAFGSLF). Lys-215 provides a ligand contact to trans,octa-cis-decaprenyl phosphate. The next 3 membrane-spanning stretches (helical) occupy residues 244-264 (FVWTMAATAVVMSYALWGFDL), 273-293 (PWYQISMVPFTIAILRYAAGV), and 310-330 (VLQVLALAWVFCIVMAVYIMP).

Belongs to the UbiA prenyltransferase family. DPPR synthase subfamily. Mg(2+) serves as cofactor.

It is found in the cell inner membrane. It carries out the reaction trans,octa-cis-decaprenyl phosphate + 5-phospho-alpha-D-ribose 1-diphosphate + H(+) = trans,octa-cis-decaprenylphospho-beta-D-ribofuranose 5-phosphate + diphosphate. The protein operates within cell wall biogenesis; cell wall polysaccharide biosynthesis. Functionally, involved in the biosynthesis of decaprenylphosphoryl arabinose (DPA) a precursor for arabinan synthesis in mycobacterial cell wall biosynthesis. Catalyzes the transfer of a 5-phosphoribosyl residue from phosphoribose diphosphate (PRPP) to decaprenyl phosphate (DP) to form decaprenylphosphoryl-5-phosphoribose (DPPR). In Corynebacterium glutamicum (strain ATCC 13032 / DSM 20300 / JCM 1318 / BCRC 11384 / CCUG 27702 / LMG 3730 / NBRC 12168 / NCIMB 10025 / NRRL B-2784 / 534), this protein is Decaprenyl-phosphate phosphoribosyltransferase.